Reading from the N-terminus, the 156-residue chain is MKLQLVAVGTKMPDWVQTGFTDYLRRFPKDMPFELLEIPAGKRGKNADIKRILEREGEQMLAAVGKGNRIVTLDIPGTRWETPHLAQQLERWKQDGRDVSLLIGGPEGLSPECKAAAEQSWSLSPLTLPHPLVRVLVAESLYRAWSITTNHPYHRE.

S-adenosyl-L-methionine contacts are provided by residues L73, G104, and 123–128; that span reads LSPLTL.

This sequence belongs to the RNA methyltransferase RlmH family. Homodimer.

The protein localises to the cytoplasm. It carries out the reaction pseudouridine(1915) in 23S rRNA + S-adenosyl-L-methionine = N(3)-methylpseudouridine(1915) in 23S rRNA + S-adenosyl-L-homocysteine + H(+). In terms of biological role, specifically methylates the pseudouridine at position 1915 (m3Psi1915) in 23S rRNA. The chain is Ribosomal RNA large subunit methyltransferase H from Pectobacterium atrosepticum (strain SCRI 1043 / ATCC BAA-672) (Erwinia carotovora subsp. atroseptica).